Reading from the N-terminus, the 209-residue chain is Protein phosphotransferase ChpT (209 aa).

At His-22 the chain carries Phosphohistidine.

It belongs to the ChpT phosphotransferase family. As to quaternary structure, homodimer. Forms an asymmetric heterotetramer with CtrA (2:2). There are at least two modes of interaction between ChpT and CtrA, only one of which is competent to catalyze His-Asp phosphoryl transfer. Post-translationally, is phosphorylated by CckA-P on His-22.

The protein localises to the cytoplasm. Functionally, component of a regulatory phosphorelay system that controls B.abortus cell growth, division, and intracellular survival inside mammalian host cells. This signaling pathway is composed of CckA, ChpT, CtrA and CpdR. ChpT efficiently and specifically shuttles phosphoryl groups from the CckA kinase to the receiver domains of both CtrA and CpdR. Does not bind ATP. Overexpression of chpT results in a defect in cell morphology, DNA content, and intracellular survival in human macrophages. The protein is Protein phosphotransferase ChpT of Brucella abortus (strain 2308).